Reading from the N-terminus, the 192-residue chain is NADH-quinone oxidoreductase subunit B 1 (192 aa).

4 residues coordinate [4Fe-4S] cluster: cysteine 71, cysteine 72, cysteine 136, and cysteine 166.

The protein belongs to the complex I 20 kDa subunit family. In terms of assembly, NDH-1 is composed of 14 different subunits. Subunits NuoB, C, D, E, F, and G constitute the peripheral sector of the complex. It depends on [4Fe-4S] cluster as a cofactor.

The protein resides in the cell inner membrane. It carries out the reaction a quinone + NADH + 5 H(+)(in) = a quinol + NAD(+) + 4 H(+)(out). Functionally, NDH-1 shuttles electrons from NADH, via FMN and iron-sulfur (Fe-S) centers, to quinones in the respiratory chain. The immediate electron acceptor for the enzyme in this species is believed to be ubiquinone. Couples the redox reaction to proton translocation (for every two electrons transferred, four hydrogen ions are translocated across the cytoplasmic membrane), and thus conserves the redox energy in a proton gradient. The protein is NADH-quinone oxidoreductase subunit B 1 of Rhizobium meliloti (strain 1021) (Ensifer meliloti).